A 100-amino-acid chain; its full sequence is Urease subunit gamma (100 aa).

It belongs to the urease gamma subunit family. In terms of assembly, heterotrimer of UreA (gamma), UreB (beta) and UreC (alpha) subunits. Three heterotrimers associate to form the active enzyme.

Its subcellular location is the cytoplasm. It carries out the reaction urea + 2 H2O + H(+) = hydrogencarbonate + 2 NH4(+). The protein operates within nitrogen metabolism; urea degradation; CO(2) and NH(3) from urea (urease route): step 1/1. The sequence is that of Urease subunit gamma from Cereibacter sphaeroides (strain ATCC 17025 / ATH 2.4.3) (Rhodobacter sphaeroides).